The chain runs to 110 residues: Large ribosomal subunit protein eL30 (110 aa).

The protein belongs to the eukaryotic ribosomal protein eL30 family.

This is Large ribosomal subunit protein eL30 (rpl30e) from Methanocaldococcus jannaschii (strain ATCC 43067 / DSM 2661 / JAL-1 / JCM 10045 / NBRC 100440) (Methanococcus jannaschii).